The following is a 604-amino-acid chain: MSEHDMQNTNPPLPPMPPEITQLLSGLDAAQWAWLSGYAWAKAGNGASAGLPALQTALPTAEPFSVTVLSASQTGNAKSVADKAADSLEAAGIQVSRAELKDYKAKNIAGERRLLLVTSTQGEGEPPEEAVVLHKLLNGKKAPKLDKLQFAVLGLGDSSYPNFCRAGKDFDKRFEELGAKRLLERVDADLDFAAAADGWTDNIAALLKEEAAKNRATPAPQTTPPAGLQTAPDGRYCKADPFPAALLANQKITARQSDKDVRHIEIDLSGSDLHYLPGDALGVWFDNDPALVREILDLLGIDQATEIQAGGKTLPVASALLSHFELTQNTPAFVKGYAPFADDDELDRIAADNAVLQGFVQSTPIADVLHRFPAKLTAEQFAGLLRPLAPRLYSISSSQAEVGDEVHLTVGAVRFEHEGRARAGGASGFLADRLEEDGTVRVFVERNDGFRLPEDSRKPIVMIGSGTGVAPFRAFVQQRAAENAEGKNWLFFGNPHFARDFLYQTEWQQFAKDGFLHRYDFAWSRDQEEKIYVQDKIREQAEGLWQWLQEGAHIYVCGDAAKMAKDVEAALLDVIIGAGHLDEEGAEEYLDMLREEKRYQRDVY.

Positions 66 to 204 (VTVLSASQTG…AADGWTDNIA (139 aa)) constitute a Flavodoxin-like domain. Residues 72 to 77 (SQTGNA), 119 to 122 (STQG), and 155 to 164 (LGDSSYPNFC) each bind FMN. Residues 239-453 (ADPFPAALLA…VERNDGFRLP (215 aa)) enclose the FAD-binding FR-type domain. Residues threonine 327, glutamine 361, 391-394 (RLYS), 409-411 (TVG), and 424-427 (GGAS) each bind FAD. NADP(+)-binding positions include 524–525 (SR), 530–534 (KIYVQ), and aspartate 566. Tyrosine 604 serves as a coordination point for FAD.

Belongs to the NADPH-dependent sulphite reductase flavoprotein subunit CysJ family. It in the N-terminal section; belongs to the flavodoxin family. This sequence in the C-terminal section; belongs to the flavoprotein pyridine nucleotide cytochrome reductase family. As to quaternary structure, alpha(8)-beta(8). The alpha component is a flavoprotein, the beta component is a hemoprotein. The cofactor is FAD. Requires FMN as cofactor.

It catalyses the reaction hydrogen sulfide + 3 NADP(+) + 3 H2O = sulfite + 3 NADPH + 4 H(+). Its pathway is sulfur metabolism; hydrogen sulfide biosynthesis; hydrogen sulfide from sulfite (NADPH route): step 1/1. Component of the sulfite reductase complex that catalyzes the 6-electron reduction of sulfite to sulfide. This is one of several activities required for the biosynthesis of L-cysteine from sulfate. The flavoprotein component catalyzes the electron flow from NADPH -&gt; FAD -&gt; FMN to the hemoprotein component. The polypeptide is Sulfite reductase [NADPH] flavoprotein alpha-component (Neisseria meningitidis serogroup A / serotype 4A (strain DSM 15465 / Z2491)).